The following is a 339-amino-acid chain: DNA-directed RNA polymerase subunit alpha (339 aa).

An alpha N-terminal domain (alpha-NTD) region spans residues 1 to 235 (MVREEVAVST…DLFIPFLHGE (235 aa)). An alpha C-terminal domain (alpha-CTD) region spans residues 267 to 339 (KAIALECIFI…FTIDLPKNKF (73 aa)).

The protein belongs to the RNA polymerase alpha chain family. As to quaternary structure, in plastids the minimal PEP RNA polymerase catalytic core is composed of four subunits: alpha, beta, beta', and beta''. When a (nuclear-encoded) sigma factor is associated with the core the holoenzyme is formed, which can initiate transcription.

It is found in the plastid. It localises to the chloroplast. The catalysed reaction is RNA(n) + a ribonucleoside 5'-triphosphate = RNA(n+1) + diphosphate. DNA-dependent RNA polymerase catalyzes the transcription of DNA into RNA using the four ribonucleoside triphosphates as substrates. This chain is DNA-directed RNA polymerase subunit alpha, found in Drimys granadensis.